We begin with the raw amino-acid sequence, 186 residues long: Casparian strip membrane protein 3 (186 aa).

The Cytoplasmic portion of the chain corresponds to 1-26; the sequence is MTKSTYVELGEEKTSNQKGNMKRGVS. The chain crosses the membrane as a helical span at residues 27–47; that stretch reads ILDFILRLIAIVATLASAIAM. Residues 48–74 are Extracellular-facing; sequence GTTDESLPFFTQFVRFRANYDDLPTLR. The chain crosses the membrane as a helical span at residues 75-95; it reads FFVVASAIVSGYLILSLPLSI. The Cytoplasmic segment spans residues 96–107; it reads LHIIRSSAGMTR. Residues 108–128 form a helical membrane-spanning segment; it reads VIFIILDTVMLGLLTAGSSAA. The Extracellular segment spans residues 129–161; sequence ASIVYLAHKGNRKANWFAFCQQYNSFCERISGS. The helical transmembrane segment at 162–182 threads the bilayer; it reads LIGSFIAIPLFIMLILLSALV. The Cytoplasmic segment spans residues 183-186; sequence LSRR.

Belongs to the Casparian strip membrane proteins (CASP) family. Homodimer and heterodimers.

It localises to the cell membrane. Functionally, regulates membrane-cell wall junctions and localized cell wall deposition. Required for establishment of the Casparian strip membrane domain (CSD) and the subsequent formation of Casparian strips, a cell wall modification of the root endodermis that determines an apoplastic barrier between the intraorganismal apoplasm and the extraorganismal apoplasm and prevents lateral diffusion. This Medicago truncatula (Barrel medic) protein is Casparian strip membrane protein 3.